The chain runs to 166 residues: Large ribosomal subunit protein uL10 (166 aa).

Belongs to the universal ribosomal protein uL10 family. Part of the ribosomal stalk of the 50S ribosomal subunit. The N-terminus interacts with L11 and the large rRNA to form the base of the stalk. The C-terminus forms an elongated spine to which L12 dimers bind in a sequential fashion forming a multimeric L10(L12)X complex.

In terms of biological role, forms part of the ribosomal stalk, playing a central role in the interaction of the ribosome with GTP-bound translation factors. The sequence is that of Large ribosomal subunit protein uL10 from Streptococcus uberis (strain ATCC BAA-854 / 0140J).